The following is an 846-amino-acid chain: Choline trimethylamine-lyase (846 aa).

A PFL domain is found at Pro-60–Arg-718. Cys-489 serves as the catalytic Cysteine radical intermediate. The active-site Proton acceptor is the Glu-491. The Glycine radical domain maps to Asp-725 to Phe-846. Gly-821 carries the glycine radical modification.

Belongs to the glycyl radical enzyme (GRE) family. CutC subfamily. In terms of assembly, homodimer. Post-translationally, requires the activating protein CutD to generate the key active site glycyl radical on Gly-821 that is involved in catalysis.

The enzyme catalyses choline = trimethylamine + acetaldehyde. It functions in the pathway amine and polyamine metabolism; choline degradation. In terms of biological role, glycine radical enzyme that catalyzes the cleavage of a C-N bond in choline, producing trimethylamine (TMA) and acetaldehyde. Is involved in the anaerobic choline utilization pathway that allows D.alaskensis to grow on choline as a source of carbon and energy. Is strictly specific for choline as substrate. This Oleidesulfovibrio alaskensis (strain ATCC BAA-1058 / DSM 17464 / G20) (Desulfovibrio alaskensis) protein is Choline trimethylamine-lyase.